The chain runs to 682 residues: Potassium-transporting ATPase ATP-binding subunit (682 aa).

The next 4 helical transmembrane spans lie at 34–54 (PVMF…LAMV), 58–78 (IAGS…TVLF), 219–239 (IALT…TATL), and 254–274 (VLVA…LSAI). Catalysis depends on Asp-307, which acts as the 4-aspartylphosphate intermediate. ATP is bound by residues Asp-344, Glu-348, 377–384 (FTAQSRMS), and Lys-395. Mg(2+) contacts are provided by Asp-518 and Asp-522. A run of 3 helical transmembrane segments spans residues 588 to 608 (FAII…LNVM), 616 to 636 (AILS…PLAL), and 662 to 682 (LVVP…LGLA).

The protein belongs to the cation transport ATPase (P-type) (TC 3.A.3) family. Type IA subfamily. As to quaternary structure, the system is composed of three essential subunits: KdpA, KdpB and KdpC.

It localises to the cell inner membrane. It catalyses the reaction K(+)(out) + ATP + H2O = K(+)(in) + ADP + phosphate + H(+). In terms of biological role, part of the high-affinity ATP-driven potassium transport (or Kdp) system, which catalyzes the hydrolysis of ATP coupled with the electrogenic transport of potassium into the cytoplasm. This subunit is responsible for energy coupling to the transport system and for the release of the potassium ions to the cytoplasm. This chain is Potassium-transporting ATPase ATP-binding subunit, found in Salmonella paratyphi A (strain ATCC 9150 / SARB42).